The chain runs to 160 residues: Dysbindin domain-containing protein 1 (160 aa).

A phosphoserine mark is found at S3, S97, and S121. The tract at residues 95–160 (ADSDDENLAT…FLTVEEPKED (66 aa)) is disordered. Residues 127–143 (TRAEQNREKQPPSDPER) are compositionally biased toward basic and acidic residues.

It belongs to the dysbindin family.

In Mus musculus (Mouse), this protein is Dysbindin domain-containing protein 1 (Dbndd1).